A 503-amino-acid polypeptide reads, in one-letter code: Lysine--tRNA ligase (503 aa).

2 residues coordinate Mg(2+): Glu-413 and Glu-420.

Belongs to the class-II aminoacyl-tRNA synthetase family. As to quaternary structure, homodimer. Mg(2+) serves as cofactor.

It localises to the cytoplasm. It catalyses the reaction tRNA(Lys) + L-lysine + ATP = L-lysyl-tRNA(Lys) + AMP + diphosphate. In Mannheimia succiniciproducens (strain KCTC 0769BP / MBEL55E), this protein is Lysine--tRNA ligase.